We begin with the raw amino-acid sequence, 629 residues long: uncharacterized protein (629 aa).

Over residues 1–11 (MSDDQQNGKQN) the composition is skewed to polar residues. Disordered stretches follow at residues 1–24 (MSDD…EQDD), 62–87 (SNNN…SNYN), 197–464 (SEES…SSLI), and 493–560 (PTPT…STPD). Positions 247-264 (PSSSSSSSSLINSPTTSK) are enriched in low complexity. Residues 274 to 288 (PTINPKSLFGLSSTI) show a composition bias toward polar residues. Residues 294-430 (VKTEKEKEKE…DETLNKETPH (137 aa)) are compositionally biased toward basic and acidic residues. Composition is skewed to low complexity over residues 434 to 464 (PHIT…SSLI) and 493 to 554 (PTPT…NNNN).

This is an uncharacterized protein from Dictyostelium discoideum (Social amoeba).